We begin with the raw amino-acid sequence, 168 residues long: ATP synthase subunit d, mitochondrial (168 aa).

This sequence belongs to the ATPase d subunit family. F-type ATPases have 2 components, CF(1) - the catalytic core - and CF(0) - the membrane proton channel. CF(0) seems to have nine subunits: a, b, c, d, e, f, g, F6 and 8 (or A6L).

Its subcellular location is the mitochondrion. It localises to the mitochondrion inner membrane. Functionally, mitochondrial membrane ATP synthase (F(1)F(0) ATP synthase or Complex V) produces ATP from ADP in the presence of a proton gradient across the membrane which is generated by electron transport complexes of the respiratory chain. F-type ATPases consist of two structural domains, F(1) - containing the extramembraneous catalytic core, and F(0) - containing the membrane proton channel, linked together by a central stalk and a peripheral stalk. During catalysis, ATP synthesis in the catalytic domain of F(1) is coupled via a rotary mechanism of the central stalk subunits to proton translocation. Part of the complex F(0) domain and the peripheric stalk, which acts as a stator to hold the catalytic alpha(3)beta(3) subcomplex and subunit a/ATP6 static relative to the rotary elements. The polypeptide is ATP synthase subunit d, mitochondrial (Arabidopsis thaliana (Mouse-ear cress)).